Reading from the N-terminus, the 570-residue chain is Methionine--tRNA ligase (570 aa).

A 'HIGH' region motif is present at residues 11-21 (PYVQTVPHLGN). Positions 143, 146, 156, and 159 each coordinate Zn(2+). The 'KMSKS' region signature appears at 333–337 (KFSKS). Lys336 serves as a coordination point for ATP.

Belongs to the class-I aminoacyl-tRNA synthetase family. MetG type 1 subfamily. The cofactor is Zn(2+).

The protein localises to the cytoplasm. The catalysed reaction is tRNA(Met) + L-methionine + ATP = L-methionyl-tRNA(Met) + AMP + diphosphate. Is required not only for elongation of protein synthesis but also for the initiation of all mRNA translation through initiator tRNA(fMet) aminoacylation. The sequence is that of Methionine--tRNA ligase from Pyrobaculum arsenaticum (strain DSM 13514 / JCM 11321 / PZ6).